We begin with the raw amino-acid sequence, 224 residues long: TM2 domain-containing protein amaretto (224 aa).

The N-terminal stretch at 1–18 is a signal peptide; sequence MRIFYGLLAFLVARQHDA. At 19–154 the chain is on the extracellular side; it reads QAIQARSDKE…FLRAGVPCVR (136 aa). Asparagine 102 and asparagine 142 each carry an N-linked (GlcNAc...) asparagine glycan. The helical transmembrane segment at 155–175 threads the bilayer; the sequence is YTDHYFVTTLIYSMLLGFLGM. Residues 157–205 enclose the TM2 domain; the sequence is DHYFVTTLIYSMLLGFLGMDRFCLGQTGTAVGKLLTMGGVGVWWIIDVI. At 176-189 the chain is on the cytoplasmic side; sequence DRFCLGQTGTAVGK. The chain crosses the membrane as a helical span at residues 190–210; sequence LLTMGGVGVWWIIDVILLITN. Residues 211–224 are Extracellular-facing; the sequence is NLLPEDGSNWNPYV.

This sequence belongs to the TM2 family.

It is found in the membrane. In terms of biological role, positive regulator of Notch signaling. Maternal neurogenic factor involved in Notch signaling-dependent neuroectodermal specification during early embryogenesis. Functions cooperatively with amx/TM2D3 and bisc/TM2D1. This chain is TM2 domain-containing protein amaretto, found in Drosophila melanogaster (Fruit fly).